A 464-amino-acid polypeptide reads, in one-letter code: CRISPR system endoribonuclease Csm6 (464 aa).

The CARF domain stretch occupies residues 1–190; sequence MEDLDALWER…LRILPNPHEA (190 aa). The HEPN domain stretch occupies residues 191-464; it reads LAEVDALFAK…LSPEPVPLGF (274 aa).

This sequence belongs to the CRISPR-associated Csm6 family. Homodimer. The protein forms a twisted, head-to-head dimer; the composite ssRNase active site is formed at the dimer interface. It depends on Does not require a metal cofactor. as a cofactor.

Non-specific ssRNase activity is allosterically activated about 1000-fold by cyclic tetraadenylate (cA4), which probably binds to its CARF domain. Functionally, CRISPR (clustered regularly interspaced short palindromic repeat) is an adaptive immune system that provides protection against mobile genetic elements (viruses, transposable elements and conjugative plasmids). CRISPR clusters contain spacers, sequences complementary to antecedent mobile elements, and target invading nucleic acids. CRISPR clusters are transcribed and processed into CRISPR RNA (crRNA). The type III-A Csm effector complex binds crRNA and acts as a crRNA-guided RNase, DNase and cyclic oligoadenylate synthase; binding of target RNA cognate to the crRNA is required for all activities. This protein is not part of the Csm effector complex. A single-strand-specific endoribonuclease (ssRNase) producing free 5'-OH. Activity is approximately 1000-fold stimulated by cyclic oligoadenylate (cOA); only cyclic tetraadenylate (cA4) stimulates the ssRNase activity while linear oligoadenylates do not activate the RNase. Another study showed stimulation by linear tetraadenylate at very high concentrations, but did not examine stimulation by cA4. The chain is CRISPR system endoribonuclease Csm6 from Thermus thermophilus (strain ATCC 27634 / DSM 579 / HB8).